Reading from the N-terminus, the 315-residue chain is Acetyl-coenzyme A carboxylase carboxyl transferase subunit alpha (315 aa).

Positions 39-293 (RLQDKSSTLT…RGELASQLAM (255 aa)) constitute a CoA carboxyltransferase C-terminal domain.

This sequence belongs to the AccA family. Acetyl-CoA carboxylase is a heterohexamer composed of biotin carboxyl carrier protein (AccB), biotin carboxylase (AccC) and two subunits each of ACCase subunit alpha (AccA) and ACCase subunit beta (AccD).

The protein resides in the cytoplasm. It catalyses the reaction N(6)-carboxybiotinyl-L-lysyl-[protein] + acetyl-CoA = N(6)-biotinyl-L-lysyl-[protein] + malonyl-CoA. It functions in the pathway lipid metabolism; malonyl-CoA biosynthesis; malonyl-CoA from acetyl-CoA: step 1/1. In terms of biological role, component of the acetyl coenzyme A carboxylase (ACC) complex. First, biotin carboxylase catalyzes the carboxylation of biotin on its carrier protein (BCCP) and then the CO(2) group is transferred by the carboxyltransferase to acetyl-CoA to form malonyl-CoA. This chain is Acetyl-coenzyme A carboxylase carboxyl transferase subunit alpha, found in Pseudomonas fluorescens (strain SBW25).